The primary structure comprises 346 residues: Protein RecA (346 aa).

Residue Gly64–Thr71 participates in ATP binding.

The protein belongs to the RecA family.

It is found in the cytoplasm. Can catalyze the hydrolysis of ATP in the presence of single-stranded DNA, the ATP-dependent uptake of single-stranded DNA by duplex DNA, and the ATP-dependent hybridization of homologous single-stranded DNAs. It interacts with LexA causing its activation and leading to its autocatalytic cleavage. The polypeptide is Protein RecA (Bacillus pumilus (strain SAFR-032)).